Reading from the N-terminus, the 819-residue chain is DNA topoisomerase 4 subunit A (819 aa).

The Topo IIA-type catalytic domain maps to 30–496; that stretch reads LPDIRDGLKP…QIIEIDTASL (467 aa). The active-site O-(5'-phospho-DNA)-tyrosine intermediate is Tyr118.

It belongs to the type II topoisomerase GyrA/ParC subunit family. ParC type 2 subfamily. In terms of assembly, heterotetramer composed of ParC and ParE.

The protein resides in the cell membrane. The enzyme catalyses ATP-dependent breakage, passage and rejoining of double-stranded DNA.. In terms of biological role, topoisomerase IV is essential for chromosome segregation. It relaxes supercoiled DNA. Performs the decatenation events required during the replication of a circular DNA molecule. The protein is DNA topoisomerase 4 subunit A of Streptococcus pyogenes serotype M6 (strain ATCC BAA-946 / MGAS10394).